Consider the following 244-residue polypeptide: Lytic polysaccharide monooxygenase-like protein ANIA_04702 (244 aa).

The first 23 residues, 1 to 23 (MLMSTSPSPWLAAAMLCIGLANA), serve as a signal peptide directing secretion. A Cu(2+)-binding site is contributed by His24. A Methylhistidine modification is found at His24. Residues Asn57, Asn80, Asn118, Asn159, Asn192, and Asn198 are each glycosylated (N-linked (GlcNAc...) asparagine). Cystine bridges form between Cys72/Cys177 and Cys142/Cys196. Asn215 carries the GPI-anchor amidated asparagine lipid modification. Residues 216–244 (AGLEAVTVPSFLTAVVPTFLGIAYGLLMA) constitute a propeptide, removed in mature form.

The protein belongs to the X325 family. Requires Cu(2+) as cofactor. The catalytically essential N-terminal histidine His-24 is post-translationally modified by methylation to prevent protonation of the histidine side chain, and protect the critical active site of the enzyme from oxidative damage.

The protein resides in the cell membrane. In terms of biological role, lytic polysaccharide monooxygenase-like protein that has diverged to biological functions other than polysaccharide degradation since it does not perform oxidative cleavage of polysaccharides. Acts as a cell surface-bound protein that functions in the copper-accumulation pathway. May also act as the major cell wall sensor that regulates MAP kinase-dependent hyphal anastomosis, the fusion of hyphal cells. In Emericella nidulans (strain FGSC A4 / ATCC 38163 / CBS 112.46 / NRRL 194 / M139) (Aspergillus nidulans), this protein is Lytic polysaccharide monooxygenase-like protein ANIA_04702.